We begin with the raw amino-acid sequence, 84 residues long: Large ribosomal subunit protein bL27 (84 aa).

Residues 1–22 (MAHKKGASSTRNGRDSNAQRLG) form a disordered region. A compositionally biased stretch (polar residues) spans 7–19 (ASSTRNGRDSNAQ).

It belongs to the bacterial ribosomal protein bL27 family.

The protein is Large ribosomal subunit protein bL27 of Streptomyces coelicolor (strain ATCC BAA-471 / A3(2) / M145).